Reading from the N-terminus, the 170-residue chain is Large ribosomal subunit protein uL5 (170 aa).

It belongs to the universal ribosomal protein uL5 family. As to quaternary structure, part of the 50S ribosomal subunit; contacts the 5S rRNA and probably tRNA. Forms a bridge to the 30S subunit in the 70S ribosome.

Functionally, this is one of the proteins that bind and probably mediate the attachment of the 5S RNA into the large ribosomal subunit, where it forms part of the central protuberance. In the 70S ribosome it contacts protein S13 of the 30S subunit (bridge B1b), connecting the 2 subunits; this bridge is implicated in subunit movement. May contact the P site tRNA; the 5S rRNA and some of its associated proteins might help stabilize positioning of ribosome-bound tRNAs. The chain is Large ribosomal subunit protein uL5 from Methanobrevibacter smithii (strain ATCC 35061 / DSM 861 / OCM 144 / PS).